Reading from the N-terminus, the 655-residue chain is Alpha-L-iduronidase (655 aa).

The first 25 residues, 1-25, serve as a signal peptide directing secretion; the sequence is MRPPGPRAPGLALLAALLAAPRALA. Residues proline 53, leucine 55, and histidine 57 each coordinate alpha-D-mannopyranose. Histidine 90 is an alpha-L-iduronate binding site. N-linked (GlcNAc...) asparagine glycosylation occurs at asparagine 109. Alpha-L-iduronate is bound by residues asparagine 180 and glutamate 181. The active-site Proton donor is glutamate 181. Asparagine 189 and asparagine 242 each carry an N-linked (GlcNAc...) asparagine glycan. Positions 263, 298, and 304 each coordinate alpha-L-iduronate. Glutamate 298 functions as the Nucleophile in the catalytic mechanism. Position 305 (tryptophan 305) interacts with alpha-D-mannopyranose. Asparagine 335 carries an N-linked (GlcNAc...) asparagine glycan. Alpha-L-iduronate is bound by residues aspartate 348 and arginine 362. N-linked (GlcNAc...) asparagine glycans are attached at residues asparagine 371 and asparagine 414. A disulfide bond links cysteine 540 and cysteine 576.

This sequence belongs to the glycosyl hydrolase 39 family. Monomer. In terms of processing, a smaller 63 kDa protein probably arises from IDUA protein by proteolytic cleavage. N-glycosylation contributes to substrate binding and is required for full enzymatic activity. Detected in testis (at protein level). Expressed ubiquitously.

The protein resides in the lysosome. The enzyme catalyses Hydrolysis of unsulfated alpha-L-iduronosidic linkages in dermatan sulfate.. This Canis lupus familiaris (Dog) protein is Alpha-L-iduronidase (IDUA).